A 770-amino-acid polypeptide reads, in one-letter code: Molybdenum cofactor sulfurase (770 aa).

Position 231 is an N6-(pyridoxal phosphate)lysine (Lys231). Cys395 is an active-site residue. In terms of domain architecture, MOSC spans 601–770; the sequence is DWVSRALGVS…TVSGVIEESE (170 aa).

This sequence belongs to the class-V pyridoxal-phosphate-dependent aminotransferase family. MOCOS subfamily. It depends on pyridoxal 5'-phosphate as a cofactor.

It catalyses the reaction Mo-molybdopterin + L-cysteine + AH2 = thio-Mo-molybdopterin + L-alanine + A + H2O. In terms of biological role, sulfurates the molybdenum cofactor. Sulfation of molybdenum is essential for xanthine dehydrogenase (XDH) and aldehyde oxidase (ADO) enzymes in which molybdenum cofactor is liganded by 1 oxygen and 1 sulfur atom in active form. In Anopheles gambiae (African malaria mosquito), this protein is Molybdenum cofactor sulfurase.